The chain runs to 152 residues: Transcriptional regulator MraZ (152 aa).

2 SpoVT-AbrB domains span residues 5 to 52 (ATLV…PLPE) and 81 to 124 (ASEC…DETT).

It belongs to the MraZ family. Forms oligomers.

It localises to the cytoplasm. Its subcellular location is the nucleoid. Its function is as follows. Negatively regulates its own expression and that of the subsequent genes in the proximal part of the division and cell wall (dcw) gene cluster. Acts by binding directly to DNA. May also regulate the expression of genes outside the dcw cluster. This Klebsiella pneumoniae subsp. pneumoniae (strain ATCC 700721 / MGH 78578) protein is Transcriptional regulator MraZ.